The primary structure comprises 339 residues: Serpentine receptor class alpha-24 (339 aa).

Helical transmembrane passes span 26–46 (ITVKMSSVLVVTVILLSYYFA), 65–82 (LILLVCLLNSIIHQTTML), 112–132 (ELFVYYLTTYFSTYSVFSLAF), 151–171 (VSIFLLFIQLIFTLGTYYVGL), 199–219 (FRTLIMGICIIVTVFVYYLSV), 248–268 (VCILIVLQFACILISSLGVNY), and 284–304 (LAPFFVGVTYANLCLPLVIHC).

This sequence belongs to the nematode receptor-like protein sra family.

It localises to the membrane. The protein is Serpentine receptor class alpha-24 (sra-24) of Caenorhabditis elegans.